The following is a 155-amino-acid chain: Ribosomal RNA large subunit methyltransferase H (155 aa).

Residues L73, G104, and 123 to 128 (LSALTL) each bind S-adenosyl-L-methionine.

The protein belongs to the RNA methyltransferase RlmH family. Homodimer.

The protein resides in the cytoplasm. It catalyses the reaction pseudouridine(1915) in 23S rRNA + S-adenosyl-L-methionine = N(3)-methylpseudouridine(1915) in 23S rRNA + S-adenosyl-L-homocysteine + H(+). Functionally, specifically methylates the pseudouridine at position 1915 (m3Psi1915) in 23S rRNA. This chain is Ribosomal RNA large subunit methyltransferase H, found in Saccharophagus degradans (strain 2-40 / ATCC 43961 / DSM 17024).